A 148-amino-acid polypeptide reads, in one-letter code: Small ribosomal subunit protein bS6 (148 aa).

Residues 96-148 (HEEGQSAMLTRRDDRRERDGDDRPRRREGGFDRGDRGDRGPRRPRDNEAGEGA) form a disordered region.

It belongs to the bacterial ribosomal protein bS6 family.

Functionally, binds together with bS18 to 16S ribosomal RNA. The sequence is that of Small ribosomal subunit protein bS6 from Brucella abortus biovar 1 (strain 9-941).